The following is a 551-amino-acid chain: L-lactate permease (551 aa).

A run of 12 helical transmembrane segments spans residues 13-33 (NIWLSSLIASLPILFFFFALI), 37-57 (LKGYVAASWTVVIALAVALLF), 69-89 (VVYGFFYGLWPIAWIIIAAVF), 131-151 (GAAGFGAPVAITAALLVGLGF), 159-179 (LCLIVNTAPVAFGAMGIPILV), 194-214 (MVGRQLPFLTIIVLFWIMAIM), 245-265 (IGPELPDIISSLVSLVCLTLF), 306-326 (FLFLTATVTLWSIPPFKALFA), 366-386 (FDWFSATGTAILFAALLSIVW), 405-425 (LALPIYSIGMVLAFAFISNYS), 438-458 (TGSAFTFFSPFLGWLGVFLTG), and 530-550 (IFTCMVGVITTLQAYVLTWMI).

Belongs to the lactate permease family.

The protein localises to the cell inner membrane. It catalyses the reaction (S)-lactate(in) + H(+)(in) = (S)-lactate(out) + H(+)(out). It carries out the reaction (R)-lactate(in) + H(+)(in) = (R)-lactate(out) + H(+)(out). The catalysed reaction is glycolate(in) + H(+)(in) = glycolate(out) + H(+)(out). Functionally, uptake of L-lactate across the membrane. Can also transport D-lactate and glycolate. Seems to be driven by a proton motive force. This Salmonella typhi protein is L-lactate permease (lldP).